A 258-amino-acid polypeptide reads, in one-letter code: UPF0328 protein ECU07_0060 (258 aa).

It belongs to the UPF0328 family.

This chain is UPF0328 protein ECU07_0060, found in Encephalitozoon cuniculi (strain GB-M1) (Microsporidian parasite).